The following is a 128-amino-acid chain: Transcription antitermination protein NusB (128 aa).

This sequence belongs to the NusB family.

Functionally, involved in transcription antitermination. Required for transcription of ribosomal RNA (rRNA) genes. Binds specifically to the boxA antiterminator sequence of the ribosomal RNA (rrn) operons. The chain is Transcription antitermination protein NusB from Listeria monocytogenes serotype 4a (strain HCC23).